The sequence spans 414 residues: L-cysteine:1D-myo-inositol 2-amino-2-deoxy-alpha-D-glucopyranoside ligase (414 aa).

Residue Cys-44 coordinates Zn(2+). Residues 44–47 (CGIT), Thr-59, and 82–84 (NIT) contribute to the L-cysteinyl-5'-AMP site. Positions 46 to 56 (ITPYDSTHLGH) match the 'HIGH' region motif. Positions 188 to 193 (ERGGDP) match the 'ERGGDP' region motif. Residue Trp-228 participates in L-cysteinyl-5'-AMP binding. Cys-232 is a binding site for Zn(2+). An L-cysteinyl-5'-AMP-binding site is contributed by 250–252 (GSD). Position 257 (His-257) interacts with Zn(2+). Ile-284 is a binding site for L-cysteinyl-5'-AMP. Residues 290–294 (KMSKS) carry the 'KMSKS' region motif.

The protein belongs to the class-I aminoacyl-tRNA synthetase family. MshC subfamily. In terms of assembly, monomer. Requires Zn(2+) as cofactor.

It catalyses the reaction 1D-myo-inositol 2-amino-2-deoxy-alpha-D-glucopyranoside + L-cysteine + ATP = 1D-myo-inositol 2-(L-cysteinylamino)-2-deoxy-alpha-D-glucopyranoside + AMP + diphosphate + H(+). Functionally, catalyzes the ATP-dependent condensation of GlcN-Ins and L-cysteine to form L-Cys-GlcN-Ins. The polypeptide is L-cysteine:1D-myo-inositol 2-amino-2-deoxy-alpha-D-glucopyranoside ligase (mshC) (Corynebacterium diphtheriae (strain ATCC 700971 / NCTC 13129 / Biotype gravis)).